The chain runs to 115 residues: NAD(P)H-quinone oxidoreductase subunit M (115 aa).

It belongs to the complex I NdhM subunit family. As to quaternary structure, NDH-1 can be composed of about 15 different subunits; different subcomplexes with different compositions have been identified which probably have different functions.

It is found in the cellular thylakoid membrane. The enzyme catalyses a plastoquinone + NADH + (n+1) H(+)(in) = a plastoquinol + NAD(+) + n H(+)(out). It catalyses the reaction a plastoquinone + NADPH + (n+1) H(+)(in) = a plastoquinol + NADP(+) + n H(+)(out). NDH-1 shuttles electrons from an unknown electron donor, via FMN and iron-sulfur (Fe-S) centers, to quinones in the respiratory and/or the photosynthetic chain. The immediate electron acceptor for the enzyme in this species is believed to be plastoquinone. Couples the redox reaction to proton translocation, and thus conserves the redox energy in a proton gradient. Cyanobacterial NDH-1 also plays a role in inorganic carbon-concentration. In Parasynechococcus marenigrum (strain WH8102), this protein is NAD(P)H-quinone oxidoreductase subunit M.